Consider the following 474-residue polypeptide: Cell division protein FtsP (474 aa).

Positions 1-27 form a signal peptide, tat-type signal; it reads MSLSRRQFIQAAGLALGAGSLPLRAQA. A Plastocyanin-like domain is found at 229–288; that stretch reads WVRLRLLNASNARRYTLQLSDGRPLYVVASDQGFLPAPVAVQQLSLAPGERREVVIDMSQ.

This sequence belongs to the FtsP family. Post-translationally, predicted to be exported by the Tat system. The position of the signal peptide cleavage has not been experimentally proven.

Its subcellular location is the periplasm. In terms of biological role, cell division protein that is required for growth during stress conditions. May be involved in protecting or stabilizing the divisomal assembly under conditions of stress. The protein is Cell division protein FtsP of Yersinia pestis.